Here is a 350-residue protein sequence, read N- to C-terminus: Galactokinase (350 aa).

Residue 14–17 coordinates substrate; that stretch reads EHTD. ATP contacts are provided by residues S46 and 98–104; that span reads GSGLSSS. Mg(2+) is bound by residues S104 and E136. D148 (proton acceptor) is an active-site residue. Y197 provides a ligand contact to substrate.

It belongs to the GHMP kinase family. GalK subfamily.

It localises to the cytoplasm. It carries out the reaction alpha-D-galactose + ATP = alpha-D-galactose 1-phosphate + ADP + H(+). Its pathway is carbohydrate metabolism; galactose metabolism. In terms of biological role, catalyzes the transfer of the gamma-phosphate of ATP to D-galactose to form alpha-D-galactose-1-phosphate (Gal-1-P). The chain is Galactokinase from Thermococcus kodakarensis (strain ATCC BAA-918 / JCM 12380 / KOD1) (Pyrococcus kodakaraensis (strain KOD1)).